Here is a 58-residue protein sequence, read N- to C-terminus: DNA-directed RNA polymerases I, II, and III subunit RPABC4 (58 aa).

Cys-19, Cys-22, Cys-36, and Cys-39 together coordinate Zn(2+). The C4-type zinc-finger motif lies at 19–39; the sequence is CGECHTENEIKSRDPIRCREC.

The protein belongs to the archaeal Rpo12/eukaryotic RPC10 RNA polymerase subunit family. As to quaternary structure, component of the RNA polymerase I (Pol I), RNA polymerase II (Pol II) and RNA polymerase III (Pol III) complexes consisting of at least 13, 12 and 17 subunits, respectively. Pol I complex consists of a ten-subunit catalytic core composed of POLR1A/RPA1, POLR1B/RPA2, POLR1C/RPAC1, POLR1D/RPAC2, POLR1H/RPA12, POLR2E/RPABC1, POLR2F/RPABC2, POLR2H/RPABC3, POLR2K/RPABC4 and POLR2L/RPABC5; a mobile stalk subunit POLR1F/RPA43 protruding from the core and additional subunits homologous to general transcription factors POLR1E/RPA49 and POLR1G/RPA34. Part of Pol I pre-initiation complex (PIC), in which Pol I core assembles with RRN3 and promoter-bound UTBF and SL1/TIF-IB complex. Pol II complex contains a ten-subunit catalytic core composed of POLR2A/RPB1, POLR2B/RPB2, POLR2C/RPB3, POLR2I/RPB9, POLR2J/RPB11, POLR2E/RPABC1, POLR2F/RPABC2, POLR2H/RPABC3, POLR2K/RPABC4 and POLR2L/RPABC5 and a mobile stalk composed of two subunits POLR2D/RPB4 and POLR2G/RPB7. Part of Pol II(G) complex, in which Pol II core associates with an additional subunit POLR2M; unlike conventional Pol II, Pol II(G) functions as a transcriptional repressor. Part of TBP-based Pol II pre-initiation complex (PIC), in which Pol II core assembles with general transcription factors and other specific initiation factors including GTF2E1, GTF2E2, GTF2F1, GTF2F2, TCEA1, ERCC2, ERCC3, GTF2H2, GTF2H3, GTF2H4, GTF2H5, GTF2A1, GTF2A2, GTF2B and TBP; this large multi-subunit PIC complex mediates DNA unwinding and targets Pol II core to the transcription start site where the first phosphodiester bond forms. Pol III complex consists of a ten-subunit catalytic core composed of POLR3A/RPC1, POLR3B/RPC2, POLR1C/RPAC1, POLR1D/RPAC2, POLR3K/RPC10, POLR2E/RPABC1, POLR2F/RPABC2, POLR2H/RPABC3, POLR2K/RPABC4 and POLR2L/RPABC5; a mobile stalk composed of two subunits POLR3H/RPC8 and CRCP/RPC9, protruding from the core and functioning primarily in transcription initiation; and additional subunits homologous to general transcription factors of the RNA polymerase II machinery, POLR3C/RPC3-POLR3F/RPC6-POLR3G/RPC7 heterotrimer required for transcription initiation and POLR3D/RPC4-POLR3E/RPC5 heterodimer involved in both transcription initiation and termination.

The protein localises to the nucleus. It is found in the nucleolus. In terms of biological role, DNA-dependent RNA polymerase catalyzes the transcription of DNA into RNA using the four ribonucleoside triphosphates as substrates. Common component of RNA polymerases I, II and III which synthesize ribosomal RNA precursors, mRNA precursors and many functional non-coding RNAs, and a small RNAs, such as 5S rRNA and tRNAs, respectively. This Mus musculus (Mouse) protein is DNA-directed RNA polymerases I, II, and III subunit RPABC4 (Polr2k).